Here is a 310-residue protein sequence, read N- to C-terminus: Ribose-phosphate pyrophosphokinase (310 aa).

Residues 34-36 (DGE) and 93-94 (RQ) contribute to the ATP site. Mg(2+)-binding residues include His127 and Asp167. Lys190 is an active-site residue. D-ribose 5-phosphate-binding positions include Arg192, Asp216, and 220-224 (DSGGT).

This sequence belongs to the ribose-phosphate pyrophosphokinase family. Class I subfamily. Homohexamer. Requires Mg(2+) as cofactor.

Its subcellular location is the cytoplasm. It catalyses the reaction D-ribose 5-phosphate + ATP = 5-phospho-alpha-D-ribose 1-diphosphate + AMP + H(+). It participates in metabolic intermediate biosynthesis; 5-phospho-alpha-D-ribose 1-diphosphate biosynthesis; 5-phospho-alpha-D-ribose 1-diphosphate from D-ribose 5-phosphate (route I): step 1/1. Functionally, involved in the biosynthesis of the central metabolite phospho-alpha-D-ribosyl-1-pyrophosphate (PRPP) via the transfer of pyrophosphoryl group from ATP to 1-hydroxyl of ribose-5-phosphate (Rib-5-P). This Maricaulis maris (strain MCS10) (Caulobacter maris) protein is Ribose-phosphate pyrophosphokinase.